The chain runs to 260 residues: Sulfoquinovose 1-dehydrogenase (260 aa).

The active-site Proton acceptor is Y160.

It belongs to the short-chain dehydrogenases/reductases (SDR) family.

The enzyme catalyses 6-sulfo-D-quinovose + NAD(+) = 6-deoxy-6-sulfo-D-glucono-1,5-lactone + NADH + H(+). Its function is as follows. Catalyzes the oxidation of sulfoquinovose to 6-deoxy-6-sulfo-D-glucono-1,5-lactone, with a strong preference for NAD(+) as the electron acceptor. Is involved in a degradation pathway of sulfoquinovose (SQ) that allows P.putida SQ1 to use SQ as the sole carbon and energy source for growth. The protein is Sulfoquinovose 1-dehydrogenase of Pseudomonas putida (Arthrobacter siderocapsulatus).